The primary structure comprises 437 residues: MNTVPEPSAELLARAGAVRLAAVELGQTNNGQRSRALHAMADALQERSSLIVAANVQDLERSEAEGLASALMARLKLDATKLQAAIDGVRKVASLPDPLGLRQLHRELDTDLVLERITVPLGVVGVIFEARPDAVVQIASLAIRSGNGALLKGGSEARCTNEAVMDALRAGLAREESDVSPDALALLTTREESLGLLRLDGLVDLIIPRGSNELVRFIQDNTRIPVLGHADGVCHLYVDAAADVMKATRVAVDSKTQYPAACNAIETLLVHRSIATAFLAAAVPAFQAAGVTLRGDAESQSLGVNESAQEEDWSTEYLDLTLSVRVVDDLACATEHIRRYGSRHTEVILTEDLATADRFLAAVDSAGVYHNCSSRFADGFRYGFGAEVGISTQTLPPRGPVGLEGLVTYRYRLRGNGHIAADYAAGRRSFTHQDLPL.

This sequence belongs to the gamma-glutamyl phosphate reductase family.

The protein resides in the cytoplasm. It catalyses the reaction L-glutamate 5-semialdehyde + phosphate + NADP(+) = L-glutamyl 5-phosphate + NADPH + H(+). The protein operates within amino-acid biosynthesis; L-proline biosynthesis; L-glutamate 5-semialdehyde from L-glutamate: step 2/2. Functionally, catalyzes the NADPH-dependent reduction of L-glutamate 5-phosphate into L-glutamate 5-semialdehyde and phosphate. The product spontaneously undergoes cyclization to form 1-pyrroline-5-carboxylate. The chain is Gamma-glutamyl phosphate reductase from Synechococcus sp. (strain CC9902).